An 862-amino-acid polypeptide reads, in one-letter code: Leucine--tRNA ligase (862 aa).

The 'HIGH' region signature appears at 49 to 59 (PYPSGRIHMGH). A 'KMSKS' region motif is present at residues 625–629 (KMSKS). Lys628 serves as a coordination point for ATP.

This sequence belongs to the class-I aminoacyl-tRNA synthetase family.

It is found in the cytoplasm. It carries out the reaction tRNA(Leu) + L-leucine + ATP = L-leucyl-tRNA(Leu) + AMP + diphosphate. In Paramagnetospirillum magneticum (strain ATCC 700264 / AMB-1) (Magnetospirillum magneticum), this protein is Leucine--tRNA ligase.